The sequence spans 500 residues: Keratin, type II cuticular Hb1 (500 aa).

The head stretch occupies residues 1-106 (MTCGSGFRGR…PNAQCVKQEE (106 aa)). In terms of domain architecture, IF rod spans 106–417 (EKEQIKCLNN…RLLEGEEQRL (312 aa)). The tract at residues 107 to 141 (KEQIKCLNNRFAAFIDKVRFLEQQNKLLETKLQFY) is coil 1A. Residues 142-151 (QNRQCCESNL) are linker 1. Positions 152-252 (EPLFNGYIET…YEEEIRVLQA (101 aa)) are coil 1B. Lys212 participates in a covalent cross-link: Glycyl lysine isopeptide (Lys-Gly) (interchain with G-Cter in SUMO1). The segment at 253–269 (HISDTSVIVKMDNSRDL) is linker 12. Positions 270 to 413 (NMDNIVAEIK…ATYRRLLEGE (144 aa)) are coil 2. A tail region spans residues 414 to 500 (EQRLCEGVGS…GSCASVCRKC (87 aa)).

This sequence belongs to the intermediate filament family. Heterotetramer of two type I and two type II keratins.

This is Keratin, type II cuticular Hb1 from Bos taurus (Bovine).